We begin with the raw amino-acid sequence, 216 residues long: Urease accessory protein UreG (216 aa).

25-32 (GPVGSGKT) contributes to the GTP binding site.

It belongs to the SIMIBI class G3E GTPase family. UreG subfamily. As to quaternary structure, homodimer. UreD, UreF and UreG form a complex that acts as a GTP-hydrolysis-dependent molecular chaperone, activating the urease apoprotein by helping to assemble the nickel containing metallocenter of UreC. The UreE protein probably delivers the nickel.

The protein localises to the cytoplasm. Functionally, facilitates the functional incorporation of the urease nickel metallocenter. This process requires GTP hydrolysis, probably effectuated by UreG. This is Urease accessory protein UreG from Burkholderia mallei (strain NCTC 10247).